The following is an 86-amino-acid chain: Small ribosomal subunit protein uS17 (86 aa).

Belongs to the universal ribosomal protein uS17 family. In terms of assembly, part of the 30S ribosomal subunit.

Functionally, one of the primary rRNA binding proteins, it binds specifically to the 5'-end of 16S ribosomal RNA. This chain is Small ribosomal subunit protein uS17, found in Lactococcus lactis subsp. cremoris (strain SK11).